The primary structure comprises 293 residues: Elongation factor Ts (293 aa).

An involved in Mg(2+) ion dislocation from EF-Tu region spans residues 79–82; sequence TDFV. Ser149 carries the post-translational modification Phosphoserine.

It belongs to the EF-Ts family.

The protein localises to the cytoplasm. In terms of biological role, associates with the EF-Tu.GDP complex and induces the exchange of GDP to GTP. It remains bound to the aminoacyl-tRNA.EF-Tu.GTP complex up to the GTP hydrolysis stage on the ribosome. The protein is Elongation factor Ts (tsf) of Bacillus subtilis (strain 168).